Here is a 670-residue protein sequence, read N- to C-terminus: DNA ligase (670 aa).

Residues 32-36 (DAEYD), 81-82 (SL), and Glu113 contribute to the NAD(+) site. The N6-AMP-lysine intermediate role is filled by Lys115. The NAD(+) site is built by Arg136, Glu173, Lys290, and Lys314. Residues Cys408, Cys411, Cys426, and Cys432 each contribute to the Zn(2+) site. Residues 592–670 (ESDSPFAGKT…EAEMIRLLGE (79 aa)) enclose the BRCT domain.

It belongs to the NAD-dependent DNA ligase family. LigA subfamily. Mg(2+) serves as cofactor. Requires Mn(2+) as cofactor.

It carries out the reaction NAD(+) + (deoxyribonucleotide)n-3'-hydroxyl + 5'-phospho-(deoxyribonucleotide)m = (deoxyribonucleotide)n+m + AMP + beta-nicotinamide D-nucleotide.. In terms of biological role, DNA ligase that catalyzes the formation of phosphodiester linkages between 5'-phosphoryl and 3'-hydroxyl groups in double-stranded DNA using NAD as a coenzyme and as the energy source for the reaction. It is essential for DNA replication and repair of damaged DNA. The polypeptide is DNA ligase (Yersinia pestis bv. Antiqua (strain Antiqua)).